A 118-amino-acid polypeptide reads, in one-letter code: Ribonuclease P protein component (118 aa).

This sequence belongs to the RnpA family. As to quaternary structure, consists of a catalytic RNA component (M1 or rnpB) and a protein subunit.

The catalysed reaction is Endonucleolytic cleavage of RNA, removing 5'-extranucleotides from tRNA precursor.. Its function is as follows. RNaseP catalyzes the removal of the 5'-leader sequence from pre-tRNA to produce the mature 5'-terminus. It can also cleave other RNA substrates such as 4.5S RNA. The protein component plays an auxiliary but essential role in vivo by binding to the 5'-leader sequence and broadening the substrate specificity of the ribozyme. The protein is Ribonuclease P protein component of Petrotoga mobilis (strain DSM 10674 / SJ95).